Reading from the N-terminus, the 490-residue chain is MVPVVALVGRPNVGKSTLFNRLTRTRDALVADFPGLTRDRKYGRAEIEGREFICIDTGGIDGTEDGVETRMAEQSLLAIEEADVVLFMVDARAGLMPADEAIAKHLRSREKPTFLVANKTDGLDPDQAVVDFYALGLGEIHPIAASHGRGVLSLLEHVLLPWMDDVAPQEEVDEDAEYWAKLAAEENGEEEPEDDFNPQDLPIKLAIVGRPNVGKSTLTNRILGEDRVVVYDMPGTTRDSIYIPMERDEREYVLIDTAGVRKRGKVTDAVEKFSVIKTLQAIEDANVVMLVIDAREGISDQDLSLLGFILNSGRSLVIVVNKWDGLTQEVKEQVKETLDFRLGFIDFARVHFISALHGSGVGNLFESVREAYDSSTRRVSTAMLTRIMAMAVEDHQPPLVRGRRVKLKYAHAGGYNPPIVVIHGNQVKDLPDSYKRYLMNYFRKSLDVMGTPIRIQFKEGENPYANKRNTLTPTQMRKRKRLIKHIKKSK.

EngA-type G domains are found at residues 3 to 166 (PVVA…MDDV) and 203 to 376 (IKLA…DSST). Residues 9-16 (GRPNVGKS), 56-60 (DTGGI), 118-121 (NKTD), 209-216 (GRPNVGKS), 256-260 (DTAGV), and 321-324 (NKWD) contribute to the GTP site. The KH-like domain occupies 377–461 (RRVSTAMLTR…PIRIQFKEGE (85 aa)).

The protein belongs to the TRAFAC class TrmE-Era-EngA-EngB-Septin-like GTPase superfamily. EngA (Der) GTPase family. Associates with the 50S ribosomal subunit.

Functionally, GTPase that plays an essential role in the late steps of ribosome biogenesis. The polypeptide is GTPase Der (Citrobacter koseri (strain ATCC BAA-895 / CDC 4225-83 / SGSC4696)).